The chain runs to 82 residues: Large ribosomal subunit protein uL23 (82 aa).

The protein belongs to the universal ribosomal protein uL23 family. Part of the 50S ribosomal subunit. Contacts protein L29.

Functionally, binds to 23S rRNA. One of the proteins that surrounds the polypeptide exit tunnel on the outside of the ribosome. The polypeptide is Large ribosomal subunit protein uL23 (Methanococcoides burtonii (strain DSM 6242 / NBRC 107633 / OCM 468 / ACE-M)).